The following is a 168-amino-acid chain: UPF0178 protein RBAM_023530 (168 aa).

It belongs to the UPF0178 family.

This Bacillus velezensis (strain DSM 23117 / BGSC 10A6 / LMG 26770 / FZB42) (Bacillus amyloliquefaciens subsp. plantarum) protein is UPF0178 protein RBAM_023530.